The following is a 96-amino-acid chain: NADH-ubiquinone oxidoreductase chain 4L (96 aa).

3 consecutive transmembrane segments (helical) span residues 2-22 (IMIL…FCFV), 28-48 (LLSM…MLFI), and 62-82 (MFLT…VSMI).

It belongs to the complex I subunit 4L family.

It localises to the mitochondrion membrane. It carries out the reaction a ubiquinone + NADH + 5 H(+)(in) = a ubiquinol + NAD(+) + 4 H(+)(out). In terms of biological role, core subunit of the mitochondrial membrane respiratory chain NADH dehydrogenase (Complex I) that is believed to belong to the minimal assembly required for catalysis. Complex I functions in the transfer of electrons from NADH to the respiratory chain. The immediate electron acceptor for the enzyme is believed to be ubiquinone. The sequence is that of NADH-ubiquinone oxidoreductase chain 4L (mt:ND4L) from Drosophila melanogaster (Fruit fly).